The sequence spans 446 residues: Glutamine synthetase (446 aa).

Positions 18-103 constitute a GS beta-grasp domain; it reads ENVRYLRLQF…LICDVYKTDG (86 aa). One can recognise a GS catalytic domain in the interval 110–446; it reads PRANLKRVLK…WERDQYMKQY (337 aa). Mg(2+) contacts are provided by Glu-134 and Glu-136. Residue Glu-186 coordinates ATP. Positions 191 and 198 each coordinate Mg(2+). L-glutamate is bound by residues 242–243 and Gly-243; that span reads NG. Position 247 (His-247) interacts with Mg(2+). Residue Ser-251 participates in ATP binding. L-glutamate is bound by residues Arg-300, Glu-306, and Arg-318. Residues Arg-318 and Arg-323 each contribute to the ATP site. Glu-335 contributes to the Mg(2+) binding site. Position 337 (Arg-337) interacts with L-glutamate.

Belongs to the glutamine synthetase family. As to quaternary structure, oligomer of 12 subunits arranged in the form of two hexagons. In its feedback-inhibited form, interacts with TnrA in order to block its DNA-binding activity. Mg(2+) is required as a cofactor.

The protein localises to the cytoplasm. The catalysed reaction is L-glutamate + NH4(+) + ATP = L-glutamine + ADP + phosphate + H(+). With respect to regulation, inhibited by glutamine. Its function is as follows. Glutamine synthetase (GS) is an unusual multitasking protein that functions as an enzyme, a transcription coregulator, and a chaperone in ammonium assimilation and in the regulation of genes involved in nitrogen metabolism. It catalyzes the ATP-dependent biosynthesis of glutamine from glutamate and ammonia. Feedback-inhibited GlnA also interacts with and regulates the activity of the transcriptional regulator TnrA. During nitrogen limitation, TnrA is in its DNA-binding active state and turns on the transcription of genes required for nitrogen assimilation. Under conditions of nitrogen excess, feedback-inhibited GlnA forms a stable complex with TnrA, which inhibits its DNA-binding activity. In contrast, feedback-inhibited GlnA acts as a chaperone to stabilize the DNA-binding activity of GlnR, which represses the transcription of nitrogen assimilation genes. The chain is Glutamine synthetase from Staphylococcus aureus (strain N315).